Here is a 314-residue protein sequence, read N- to C-terminus: HTH-type transcriptional regulator LeuO (314 aa).

Positions 22-79 (VDLNLLTVFDAVMQEQNITRAAHVLGMSQPAVSNAVARLKVMFNDELFVRYGRGIQPT) constitute an HTH lysR-type domain. The H-T-H motif DNA-binding region spans 39–58 (ITRAAHVLGMSQPAVSNAVA).

Belongs to the LysR transcriptional regulatory family.

A global transcription factor. Activates transcription of the 9 following operons; yjjQ-bglJ, yjjP, acrEF, ybdO, yjcRQP, casABCDE12, rhsD-ybbC, fepE and gltF, in most cases it probably interferes with silencing by H-NS and activates transcription. Represses transcription of the 3 following operons; uxaCA, sdaCB and btsT. H-NS repression of the bgl operon, leading to the ability to metabolize some beta-glucosides. It also directly activates the bgl operon. Activation is H-NS and BglJ-RcsB independent. The sequence is that of HTH-type transcriptional regulator LeuO (leuO) from Escherichia coli (strain K12).